Reading from the N-terminus, the 188-residue chain is Probable DNA-directed RNA polymerase subunit delta (188 aa).

The 70-residue stretch at 14-83 (LSMIEVARAI…GDNKWGLRSW (70 aa)) folds into the HTH HARE-type domain. Positions 117–188 (GDEDAIDYSD…EDDEDDEEEE (72 aa)) are disordered.

This sequence belongs to the RpoE family. In terms of assembly, RNAP is composed of a core of 2 alpha, a beta and a beta' subunits. The core is associated with a delta subunit and one of several sigma factors.

Participates in both the initiation and recycling phases of transcription. In the presence of the delta subunit, RNAP displays an increased specificity of transcription, a decreased affinity for nucleic acids, and an increased efficiency of RNA synthesis because of enhanced recycling. The polypeptide is Probable DNA-directed RNA polymerase subunit delta (Streptococcus uberis (strain ATCC BAA-854 / 0140J)).